The sequence spans 276 residues: UPF0328 protein ECU03_0010 (276 aa).

Disordered stretches follow at residues 1 to 132 (MAAP…PIIS) and 156 to 176 (SFCQ…NMVH). Basic and acidic residues predominate over residues 106–126 (HTEGCHTHEANPEPNTKHTET).

It belongs to the UPF0328 family.

The chain is UPF0328 protein ECU03_0010 from Encephalitozoon cuniculi (strain GB-M1) (Microsporidian parasite).